Here is a 185-residue protein sequence, read N- to C-terminus: Shikimate kinase (185 aa).

Position 15 to 20 (15 to 20) interacts with ATP; the sequence is GAGKST. S19 is a Mg(2+) binding site. Substrate is bound by residues D37, R61, and G83. Residue R121 coordinates ATP. R146 is a substrate binding site.

The protein belongs to the shikimate kinase family. In terms of assembly, monomer. The cofactor is Mg(2+).

Its subcellular location is the cytoplasm. It carries out the reaction shikimate + ATP = 3-phosphoshikimate + ADP + H(+). Its pathway is metabolic intermediate biosynthesis; chorismate biosynthesis; chorismate from D-erythrose 4-phosphate and phosphoenolpyruvate: step 5/7. Functionally, catalyzes the specific phosphorylation of the 3-hydroxyl group of shikimic acid using ATP as a cosubstrate. This is Shikimate kinase from Blochmanniella floridana.